A 996-amino-acid chain; its full sequence is PDZ domain-containing protein C23G3.12c (996 aa).

The interval methionine 1–glutamate 35 is disordered. 3 PDZ domains span residues serine 280 to serine 358, glutamate 745 to glycine 827, and arginine 860 to aspartate 930. The segment at lysine 972–glutamine 996 is disordered. Residues isoleucine 980–glutamine 996 are compositionally biased toward acidic residues.

The protein belongs to the peptidase S1C family.

This Schizosaccharomyces pombe (strain 972 / ATCC 24843) (Fission yeast) protein is PDZ domain-containing protein C23G3.12c.